Consider the following 130-residue polypeptide: Small ribosomal subunit protein uS9 (130 aa).

Positions 99-110 (KKAGFLTRDPRM) are enriched in basic and acidic residues. Residues 99–130 (KKAGFLTRDPRMKERKKYGLKKARRAPQFSKR) are disordered. Basic residues predominate over residues 111–130 (KERKKYGLKKARRAPQFSKR).

This sequence belongs to the universal ribosomal protein uS9 family.

This Clostridium botulinum (strain Alaska E43 / Type E3) protein is Small ribosomal subunit protein uS9.